Here is a 75-residue protein sequence, read N- to C-terminus: Small ribosomal subunit protein bS18 (75 aa).

It belongs to the bacterial ribosomal protein bS18 family. In terms of assembly, part of the 30S ribosomal subunit. Forms a tight heterodimer with protein bS6.

Its function is as follows. Binds as a heterodimer with protein bS6 to the central domain of the 16S rRNA, where it helps stabilize the platform of the 30S subunit. This is Small ribosomal subunit protein bS18 from Thermotoga maritima (strain ATCC 43589 / DSM 3109 / JCM 10099 / NBRC 100826 / MSB8).